The chain runs to 71 residues: Large ribosomal subunit protein bL31 (71 aa).

Residues Cys-16, Cys-18, Cys-37, and Cys-40 each coordinate Zn(2+).

This sequence belongs to the bacterial ribosomal protein bL31 family. Type A subfamily. In terms of assembly, part of the 50S ribosomal subunit. It depends on Zn(2+) as a cofactor.

Its function is as follows. Binds the 23S rRNA. The sequence is that of Large ribosomal subunit protein bL31 from Pectobacterium atrosepticum (strain SCRI 1043 / ATCC BAA-672) (Erwinia carotovora subsp. atroseptica).